The sequence spans 209 residues: Large ribosomal subunit protein uL3 (209 aa).

A disordered region spans residues 128–156 (FAGGSRTHGQSDRLRAPGSVGGSSDPSRT).

The protein belongs to the universal ribosomal protein uL3 family. In terms of assembly, part of the 50S ribosomal subunit. Forms a cluster with proteins L14 and L19.

In terms of biological role, one of the primary rRNA binding proteins, it binds directly near the 3'-end of the 23S rRNA, where it nucleates assembly of the 50S subunit. The protein is Large ribosomal subunit protein uL3 of Prosthecochloris aestuarii (strain DSM 271 / SK 413).